The sequence spans 149 residues: Cyanate hydratase (149 aa).

Catalysis depends on residues Arg90, Glu93, and Ser116.

Belongs to the cyanase family.

It carries out the reaction cyanate + hydrogencarbonate + 3 H(+) = NH4(+) + 2 CO2. Its function is as follows. Catalyzes the reaction of cyanate with bicarbonate to produce ammonia and carbon dioxide. The polypeptide is Cyanate hydratase (Aquifex aeolicus (strain VF5)).